A 348-amino-acid chain; its full sequence is Lipooligosaccharide heptosyltransferase 2 (348 aa).

It belongs to the glycosyltransferase 9 family.

The catalysed reaction is an L-alpha-D-Hep-(1-&gt;5)-[alpha-Kdo-(2-&gt;4)]-alpha-Kdo-(2-&gt;6)-lipid A + ADP-L-glycero-beta-D-manno-heptose = an L-alpha-D-Hep-(1-&gt;3)-L-alpha-D-Hep-(1-&gt;5)-[alpha-Kdo-(2-&gt;4)]-alpha-Kdo-(2-&gt;6)-lipid A + ADP + H(+). It functions in the pathway bacterial outer membrane biogenesis; LOS core biosynthesis. In terms of biological role, glycosyltransferase involved in the biosynthesis of the core oligosaccharide region of lipooligosaccharide (LOS). Catalyzes the addition of a heptose unit to the heptosyl-Kdo2-lipid A module. The sequence is that of Lipooligosaccharide heptosyltransferase 2 from Haemophilus ducreyi (strain 35000HP / ATCC 700724).